The chain runs to 660 residues: UPF0603 protein MT2410 (660 aa).

Residues 1–26 (MRLVRLLGMVLTILAAGLLLGPPAGA) form the signal peptide. The helical transmembrane segment at 162 to 182 (VVLLVTVGIIVIVVAVLLVVM) threads the bilayer. A coiled-coil region spans residues 488 to 567 (DQLTKVDADL…LEAAHDRKSS (80 aa)). Residues 605 to 625 (GGNNAGAILGGIIIGDLLSGG) form a helical membrane-spanning segment. The interval 638-660 (FGGSSNAPGSSPDGGFLGGGGRF) is disordered.

It belongs to the UPF0603 family.

Its subcellular location is the cell membrane. In terms of biological role, may play a role in septum formation. The protein is UPF0603 protein MT2410 of Mycobacterium tuberculosis (strain CDC 1551 / Oshkosh).